Consider the following 301-residue polypeptide: Ornithine carbamoyltransferase (301 aa).

Carbamoyl phosphate is bound by residues arginine 107 and 134 to 137 (HPLQ). L-ornithine contacts are provided by residues asparagine 165, aspartate 220, and 224-225 (SM). Carbamoyl phosphate-binding positions include 260–261 (CL) and arginine 288.

It belongs to the aspartate/ornithine carbamoyltransferase superfamily. OTCase family. As to quaternary structure, homotrimer.

The protein resides in the cytoplasm. The enzyme catalyses carbamoyl phosphate + L-ornithine = L-citrulline + phosphate + H(+). The protein operates within amino-acid biosynthesis; L-arginine biosynthesis; L-arginine from L-ornithine and carbamoyl phosphate: step 1/3. Its activity is regulated as follows. Inhibited by delta-N-phosphonoacetyl-L-ornithine. Functionally, reversibly catalyzes the transfer of the carbamoyl group from carbamoyl phosphate (CP) to the N(epsilon) atom of ornithine (ORN) to produce L-citrulline, which is a substrate for argininosuccinate synthetase, the enzyme involved in the final step in arginine biosynthesis. The chain is Ornithine carbamoyltransferase from Thermus thermophilus (strain ATCC BAA-163 / DSM 7039 / HB27).